The primary structure comprises 495 residues: IQ domain-containing protein IQM5 (495 aa).

The interval 89–122 (ENRGGEEEDERGSSPKRRNRGNLTALSLPAPTPF) is disordered. The region spanning 131-160 (LDAAAVTLQKVYKSYRTRRNLADCAVVVEE) is the IQ domain.

In terms of tissue distribution, expressed in roots, rosette and cauline leaves, and at lower levels in stems, flowers and siliques.

The protein resides in the cytoplasm. The protein localises to the nucleus. Its function is as follows. May be involved in biotic and abiotic stress responses. This chain is IQ domain-containing protein IQM5, found in Arabidopsis thaliana (Mouse-ear cress).